The following is a 470-amino-acid chain: 6-phospho-beta-galactosidase (470 aa).

Residues Q19, H116, N159, E160, and N297 each contribute to the D-galactose 6-phosphate site. E160 serves as the catalytic Proton donor. E375 (nucleophile) is an active-site residue. The D-galactose 6-phosphate site is built by S430, W431, K437, and Y439.

The protein belongs to the glycosyl hydrolase 1 family.

The catalysed reaction is a 6-phospho-beta-D-galactoside + H2O = D-galactose 6-phosphate + an alcohol. It functions in the pathway carbohydrate metabolism; lactose degradation; D-galactose 6-phosphate and beta-D-glucose from lactose 6-phosphate: step 1/1. The chain is 6-phospho-beta-galactosidase from Staphylococcus aureus (strain Mu3 / ATCC 700698).